The sequence spans 63 residues: Large ribosomal subunit protein bL35 (63 aa).

The protein belongs to the bacterial ribosomal protein bL35 family.

This chain is Large ribosomal subunit protein bL35, found in Campylobacter hominis (strain ATCC BAA-381 / DSM 21671 / CCUG 45161 / LMG 19568 / NCTC 13146 / CH001A).